A 394-amino-acid polypeptide reads, in one-letter code: Elongation factor Tu 2 (394 aa).

A tr-type G domain is found at 10-204 (KPHVNVGTIG…YLDSYIPEPE (195 aa)). The segment at 19 to 26 (GHVDHGKT) is G1. 19-26 (GHVDHGKT) is a binding site for GTP. T26 lines the Mg(2+) pocket. The tract at residues 60-64 (GITIN) is G2. The interval 81 to 84 (DCPG) is G3. Residues 81–85 (DCPGH) and 136–139 (NKCD) each bind GTP. A G4 region spans residues 136–139 (NKCD). A G5 region spans residues 174-176 (SAL).

This sequence belongs to the TRAFAC class translation factor GTPase superfamily. Classic translation factor GTPase family. EF-Tu/EF-1A subfamily. In terms of assembly, monomer.

It is found in the cytoplasm. The enzyme catalyses GTP + H2O = GDP + phosphate + H(+). Functionally, GTP hydrolase that promotes the GTP-dependent binding of aminoacyl-tRNA to the A-site of ribosomes during protein biosynthesis. This is Elongation factor Tu 2 from Serratia proteamaculans (strain 568).